The chain runs to 473 residues: Chromosomal replication initiator protein DnaA (473 aa).

Positions 1–73 (MTNIEQDRWS…LSCWQAEMPQ (73 aa)) are domain I, interacts with DnaA modulators. The tract at residues 73 to 129 (QVHRVDLTVRTAMRCAAPAKDAPAHAEPRRDDGRPAPELRATAIAPVSATHEALGGS) is domain II. The interval 130–352 (PLDPRLTFGS…GAINRLLAHS (223 aa)) is domain III, AAA+ region. Residues Gly-177, Gly-179, Lys-180, and Thr-181 each coordinate ATP. Positions 353–473 (KLNAQPVTLE…VELLKRQLQE (121 aa)) are domain IV, binds dsDNA.

This sequence belongs to the DnaA family. As to quaternary structure, oligomerizes as a right-handed, spiral filament on DNA at oriC.

It localises to the cytoplasm. Plays an essential role in the initiation and regulation of chromosomal replication. ATP-DnaA binds to the origin of replication (oriC) to initiate formation of the DNA replication initiation complex once per cell cycle. Binds the DnaA box (a 9 base pair repeat at the origin) and separates the double-stranded (ds)DNA. Forms a right-handed helical filament on oriC DNA; dsDNA binds to the exterior of the filament while single-stranded (ss)DNA is stabiized in the filament's interior. The ATP-DnaA-oriC complex binds and stabilizes one strand of the AT-rich DNA unwinding element (DUE), permitting loading of DNA polymerase. After initiation quickly degrades to an ADP-DnaA complex that is not apt for DNA replication. Binds acidic phospholipids. The polypeptide is Chromosomal replication initiator protein DnaA (Rhodopseudomonas palustris (strain BisB18)).